We begin with the raw amino-acid sequence, 271 residues long: MDPGTDSAPLAGLVWSSASAPPPPGFSAITCTVEGGTASFGRGFAQKAGYFLCLSTLGIPENPQDNVVVDMQIVMDKGPLPSGFSAVNDPQDIKASVSKKKRMCVKLMPLGTADVVVSDVKLSGKTKTVPGYLRVGDIGGFAIWCKKSKAPRPVPKPRTLSQDMRGLSLDPPKEPSKGSHPERTLSRLGSRASTLRRTDSIYEASSLYGISAMDGVPFTLHPRFEGKSCGPLNLSAFGDLTIKSLADIEKEYNYGFVVEKTAAARLPPSVS.

Residues 7–149 form the MABP domain; sequence SAPLAGLVWS…GFAIWCKKSK (143 aa). The residue at position 128 (Thr128) is a Phosphothreonine. A disordered region spans residues 149–192; sequence KAPRPVPKPRTLSQDMRGLSLDPPKEPSKGSHPERTLSRLGSRA. The SH3-binding signature appears at 153 to 158; it reads PVPKPR. Phosphoserine is present on residues Ser161 and Ser168. The segment covering 171–185 has biased composition (basic and acidic residues); it reads PPKEPSKGSHPERTL. The tract at residues 190–271 is interaction with TSG101, VPS37B and VPS28; that stretch reads SRASTLRRTD…AAARLPPSVS (82 aa). Phosphoserine is present on residues Ser193 and Ser200. Phosphotyrosine is present on Tyr202. At Ser205 the chain carries Phosphoserine. Residues 213–263 enclose the UMA domain; that stretch reads MDGVPFTLHPRFEGKSCGPLNLSAFGDLTIKSLADIEKEYNYGFVVEKTAA.

This sequence belongs to the MVB12 family. Component of the ESCRT-I complex (endosomal sorting complex required for transport I) which consists of TSG101, VPS28, a VPS37 protein (VPS37A to -D) and MVB12A or MVB12B in a 1:1:1:1 stoichiometry. Interacts with CD2AP and CIN85/SH3KBP1. Interacts with CD2AP (via one of the SH3 domains). Interacts with TSG101; the association appears to be mediated by the TSG101-VPS37 binary subcomplex. Interacts with VPS28. Interacts with VPS37B; the association appears to be mediated by the TSG101-VPS37 binary subcomplex. Interacts with VPS37C; the association appears to be mediated by the TSG101-VPS37 binary subcomplex. Interacts with VPS37D; the association appears to be mediated by the TSG101-VPS37 binary subcomplex. Interacts with CEP55. In terms of processing, phosphorylated on Tyr-202 upon EGF stimulation. Phosphorylation is required for interaction with CD2AP and CIN85/SH3KBP1.

The protein localises to the cytoplasm. The protein resides in the cytoskeleton. Its subcellular location is the nucleus. It localises to the endosome. It is found in the microtubule organizing center. The protein localises to the centrosome. The protein resides in the late endosome membrane. Its function is as follows. Component of the ESCRT-I complex, a regulator of vesicular trafficking process. Required for the sorting of endocytic ubiquitinated cargos into multivesicular bodies. May be involved in the ligand-mediated internalization and down-regulation of EGF receptor. The chain is Multivesicular body subunit 12A (Mvb12a) from Mus musculus (Mouse).